Here is a 2131-residue protein sequence, read N- to C-terminus: Protein Ycf2 (2131 aa).

1466 to 1473 serves as a coordination point for ATP; it reads GSIGTGRS.

Belongs to the Ycf2 family.

The protein localises to the plastid. Its subcellular location is the chloroplast stroma. In terms of biological role, probable ATPase of unknown function. Its presence in a non-photosynthetic plant (Epifagus virginiana) and experiments in tobacco indicate that it has an essential function which is probably not related to photosynthesis. In Helianthus annuus (Common sunflower), this protein is Protein Ycf2.